The sequence spans 487 residues: 3-octaprenyl-4-hydroxybenzoate carboxy-lyase (487 aa).

Asparagine 172 contributes to the Mn(2+) binding site. Residues 175–177, 189–191, and 194–195 each bind prenylated FMN; these read IYR, RWL, and RG. Glutamate 238 provides a ligand contact to Mn(2+). Aspartate 287 acts as the Proton donor in catalysis.

This sequence belongs to the UbiD family. Homohexamer. Prenylated FMN is required as a cofactor. The cofactor is Mn(2+).

It localises to the cell membrane. The catalysed reaction is a 4-hydroxy-3-(all-trans-polyprenyl)benzoate + H(+) = a 2-(all-trans-polyprenyl)phenol + CO2. It participates in cofactor biosynthesis; ubiquinone biosynthesis. Catalyzes the decarboxylation of 3-octaprenyl-4-hydroxy benzoate to 2-octaprenylphenol, an intermediate step in ubiquinone biosynthesis. The polypeptide is 3-octaprenyl-4-hydroxybenzoate carboxy-lyase (Thiobacillus denitrificans (strain ATCC 25259 / T1)).